We begin with the raw amino-acid sequence, 135 residues long: Retinol-binding protein 1 (135 aa).

The important for interaction with STRA6 stretch occupies residues Arg22–Lys32. Residues Lys41, Met63, and Gln109 each contribute to the all-trans-retinol site.

The protein belongs to the calycin superfamily. Fatty-acid binding protein (FABP) family. In terms of assembly, interacts (only as retinol-free apoprotein) with STRA6.

It is found in the cytoplasm. The protein resides in the lipid droplet. Functionally, cytoplasmic retinol-binding protein. Accepts retinol from the transport protein STRA6, and thereby contributes to retinol uptake, storage and retinoid homeostasis. This is Retinol-binding protein 1 (RBP1) from Bos taurus (Bovine).